The sequence spans 461 residues: MSATPPIAPIATPKVGFVSLGCPKALVDSEQIITQLRAEGYEISGTYDGADLVVVNTCGFIDEAVQESLDAIGEALNENGKVIVTGCLGAKKSASGSGLIEEVHPKVLAVTGPHALGEVMQHVHMHLPKPHDPFVDLVPAAGVKLTPRHYAYLKISEGCNHRCTFCIIPSMRGDLVSRPVADVMLEAENLFKSGVKELLVISQDTSAYGVDVKYRTGFWNGKPIKTRMTDLVGALGELAAQYGAWVRLHYVYPYPSVDEVIPMMAEGPFKGHVLPYLDVPFQHAHPEVLKRMKRPANAEKVMERVKKWREMCPDLTIRSTFIAGFPGETEEQFQTLLDFIREAELDRVGCFAYSPVEGATANELDGALPDEVREERRARFMEVAEEVSAKRIAKKVGKTLKVLVDEINADGGIGRTAADAPEIDGVVYIAPAVKASKRYKVGDFVSVKITGADGHDLWGEV.

One can recognise an MTTase N-terminal domain in the interval 13 to 128 (PKVGFVSLGC…VMQHVHMHLP (116 aa)). Residues C22, C58, C87, C159, C163, and C166 each coordinate [4Fe-4S] cluster. The region spanning 145–390 (LTPRHYAYLK…MEVAEEVSAK (246 aa)) is the Radical SAM core domain. In terms of domain architecture, TRAM spans 393–461 (AKKVGKTLKV…ADGHDLWGEV (69 aa)).

The protein belongs to the methylthiotransferase family. RimO subfamily. [4Fe-4S] cluster is required as a cofactor.

It is found in the cytoplasm. The enzyme catalyses L-aspartate(89)-[ribosomal protein uS12]-hydrogen + (sulfur carrier)-SH + AH2 + 2 S-adenosyl-L-methionine = 3-methylsulfanyl-L-aspartate(89)-[ribosomal protein uS12]-hydrogen + (sulfur carrier)-H + 5'-deoxyadenosine + L-methionine + A + S-adenosyl-L-homocysteine + 2 H(+). Its function is as follows. Catalyzes the methylthiolation of an aspartic acid residue of ribosomal protein uS12. The polypeptide is Ribosomal protein uS12 methylthiotransferase RimO (Paraburkholderia xenovorans (strain LB400)).